The sequence spans 338 residues: Pyridoxal 5'-phosphate synthase subunit PdxS (338 aa).

A D-ribose 5-phosphate-binding site is contributed by Asp-66. Catalysis depends on Lys-123, which acts as the Schiff-base intermediate with D-ribose 5-phosphate. Gly-195 contributes to the D-ribose 5-phosphate binding site. Lys-207 contacts D-glyceraldehyde 3-phosphate. D-ribose 5-phosphate contacts are provided by residues Gly-256 and 277 to 278; that span reads GS.

Belongs to the PdxS/SNZ family. In the presence of PdxT, forms a dodecamer of heterodimers.

The catalysed reaction is aldehydo-D-ribose 5-phosphate + D-glyceraldehyde 3-phosphate + L-glutamine = pyridoxal 5'-phosphate + L-glutamate + phosphate + 3 H2O + H(+). The protein operates within cofactor biosynthesis; pyridoxal 5'-phosphate biosynthesis. Catalyzes the formation of pyridoxal 5'-phosphate from ribose 5-phosphate (RBP), glyceraldehyde 3-phosphate (G3P) and ammonia. The ammonia is provided by the PdxT subunit. Can also use ribulose 5-phosphate and dihydroxyacetone phosphate as substrates, resulting from enzyme-catalyzed isomerization of RBP and G3P, respectively. The sequence is that of Pyridoxal 5'-phosphate synthase subunit PdxS from Saccharolobus islandicus (strain Y.N.15.51 / Yellowstone #2) (Sulfolobus islandicus).